The following is a 261-amino-acid chain: Small ribosomal subunit protein eS4z (261 aa).

An S4 RNA-binding domain is found at 42-104 (LPLVLIIRNR…TNENFRLLYD (63 aa)).

The protein belongs to the eukaryotic ribosomal protein eS4 family.

It localises to the cytoplasm. The protein is Small ribosomal subunit protein eS4z (RPS4A) of Arabidopsis thaliana (Mouse-ear cress).